The chain runs to 367 residues: MSVLRAVLVQDMARALLLAAAAFILTLIVGGWWVHFARKHKLGKRIRPDGPQSHLVKVGTPTMGGVMIVSTVVVLTVLFNLVDRWSMLLPLGVMISFAVLGAIDDWLSLTGTRSKTHGFTVRFKFWIMTAVAFVASLALYLPQPYGLEHEGLVQIPFVGEVNIGLWFIPIAVLIIVFISNAVNITDGLDSLAGWNLTLSFGAYGVITFLAEPRLTNLMAFCFTVVGACAAFLWYNAYPAQVFMGDLGALSLGATLAVVALQSQQWILLPVIGIVFVVEALSTLIQTGYFKWTKWRYGEGRRVFKMAPLHHHFELLGWSQPQVTQRFVLIGTVAAMVGISLALIFGSPQSQTQVDQPAMIVQETDGVR.

The next 10 helical transmembrane spans lie at 16 to 36, 62 to 82, 87 to 107, 125 to 145, 158 to 178, 190 to 210, 214 to 234, 240 to 260, 264 to 284, and 326 to 346; these read LLLA…WVHF, TMGG…FNLV, MLLP…DDWL, FWIM…PQPY, VGEV…IVFI, SLAG…TFLA, LTNL…FLWY, QVFM…VVAL, QWIL…STLI, and FVLI…IFGS.

This sequence belongs to the glycosyltransferase 4 family. MraY subfamily. The cofactor is Mg(2+).

The protein resides in the cell membrane. The catalysed reaction is UDP-N-acetyl-alpha-D-muramoyl-L-alanyl-gamma-D-glutamyl-meso-2,6-diaminopimeloyl-D-alanyl-D-alanine + di-trans,octa-cis-undecaprenyl phosphate = di-trans,octa-cis-undecaprenyl diphospho-N-acetyl-alpha-D-muramoyl-L-alanyl-D-glutamyl-meso-2,6-diaminopimeloyl-D-alanyl-D-alanine + UMP. It participates in cell wall biogenesis; peptidoglycan biosynthesis. Catalyzes the initial step of the lipid cycle reactions in the biosynthesis of the cell wall peptidoglycan: transfers peptidoglycan precursor phospho-MurNAc-pentapeptide from UDP-MurNAc-pentapeptide onto the lipid carrier undecaprenyl phosphate, yielding undecaprenyl-pyrophosphoryl-MurNAc-pentapeptide, known as lipid I. This chain is Phospho-N-acetylmuramoyl-pentapeptide-transferase, found in Chloroflexus aggregans (strain MD-66 / DSM 9485).